An 820-amino-acid polypeptide reads, in one-letter code: Leucine--tRNA ligase (820 aa).

Residues 40-51 (PYPSGAGLHVGH) carry the 'HIGH' region motif. Positions 601-605 (KMSKS) match the 'KMSKS' region motif. Residue Lys604 participates in ATP binding.

It belongs to the class-I aminoacyl-tRNA synthetase family.

It is found in the cytoplasm. The catalysed reaction is tRNA(Leu) + L-leucine + ATP = L-leucyl-tRNA(Leu) + AMP + diphosphate. The sequence is that of Leucine--tRNA ligase from Chlamydia felis (strain Fe/C-56) (Chlamydophila felis).